Reading from the N-terminus, the 166-residue chain is NADH-quinone oxidoreductase subunit B (166 aa).

Cysteine 44, cysteine 45, cysteine 110, and cysteine 140 together coordinate [4Fe-4S] cluster.

This sequence belongs to the complex I 20 kDa subunit family. NDH-1 is composed of 14 different subunits. Subunits NuoB, C, D, E, F, and G constitute the peripheral sector of the complex. [4Fe-4S] cluster serves as cofactor.

The protein localises to the cell membrane. It catalyses the reaction a quinone + NADH + 5 H(+)(in) = a quinol + NAD(+) + 4 H(+)(out). NDH-1 shuttles electrons from NADH, via FMN and iron-sulfur (Fe-S) centers, to quinones in the respiratory chain. The immediate electron acceptor for the enzyme in this species is believed to be a menaquinone. Couples the redox reaction to proton translocation (for every two electrons transferred, four hydrogen ions are translocated across the cytoplasmic membrane), and thus conserves the redox energy in a proton gradient. In Carboxydothermus hydrogenoformans (strain ATCC BAA-161 / DSM 6008 / Z-2901), this protein is NADH-quinone oxidoreductase subunit B.